Consider the following 257-residue polypeptide: NAD-capped RNA hydrolase NudC (257 aa).

Arg-69 serves as a coordination point for substrate. Zn(2+)-binding residues include Cys-98 and Cys-101. Glu-111 is a binding site for substrate. Zn(2+)-binding residues include Cys-116 and Cys-119. Residue Tyr-124 participates in substrate binding. The region spanning 125–248 (PQIAPCIIVA…TVARRLIEDT (124 aa)) is the Nudix hydrolase domain. A divalent metal cation is bound by residues Ala-158, Glu-174, and Glu-178. A Nudix box motif is present at residues 159-180 (GFVEVGETLEQAVAREVMEESG). 192–199 (QPWPFPQS) serves as a coordination point for substrate. Glu-219 is a binding site for a divalent metal cation. Ala-241 provides a ligand contact to substrate.

Belongs to the Nudix hydrolase family. NudC subfamily. As to quaternary structure, homodimer. Mg(2+) is required as a cofactor. The cofactor is Mn(2+). Requires Zn(2+) as cofactor.

The catalysed reaction is a 5'-end NAD(+)-phospho-ribonucleoside in mRNA + H2O = a 5'-end phospho-adenosine-phospho-ribonucleoside in mRNA + beta-nicotinamide D-ribonucleotide + 2 H(+). It carries out the reaction NAD(+) + H2O = beta-nicotinamide D-ribonucleotide + AMP + 2 H(+). The enzyme catalyses NADH + H2O = reduced beta-nicotinamide D-ribonucleotide + AMP + 2 H(+). Its function is as follows. mRNA decapping enzyme that specifically removes the nicotinamide adenine dinucleotide (NAD) cap from a subset of mRNAs by hydrolyzing the diphosphate linkage to produce nicotinamide mononucleotide (NMN) and 5' monophosphate mRNA. The NAD-cap is present at the 5'-end of some mRNAs and stabilizes RNA against 5'-processing. Has preference for mRNAs with a 5'-end purine. Catalyzes the hydrolysis of a broad range of dinucleotide pyrophosphates. The protein is NAD-capped RNA hydrolase NudC of Klebsiella pneumoniae subsp. pneumoniae (strain ATCC 700721 / MGH 78578).